A 1312-amino-acid polypeptide reads, in one-letter code: Retinoblastoma-like protein A (1312 aa).

Disordered regions lie at residues 1–67 (MMAH…NNEN), 168–231 (SSSS…KNSS), 336–359 (HNYN…NNNN), 536–611 (NNNN…IYGT), 987–1023 (NNNN…NNNN), 1168–1236 (KKND…NNTE), and 1249–1312 (EESP…RLKS). Residues 10–67 (TNINTKTTAPTTTTTEQQPEQQQQQPEQQQQEKQNNNNNNNNNNNNNNNINNNENNEN) show a composition bias toward low complexity. Residues 36–117 (EQQQQEKQNN…TSSALNVDQD (82 aa)) adopt a coiled-coil conformation. The segment covering 168–179 (SSSSFQPDNNSK) has biased composition (polar residues). Basic residues predominate over residues 180-189 (IKGRKIRKTN). Residues 195-230 (NNDSNEEEEETTTDTEEEEEEDTLLNENNNSINKNS) are a coiled coil. Acidic residues predominate over residues 198–218 (SNEEEEETTTDTEEEEEEDTL). 3 stretches are compositionally biased toward low complexity: residues 219–231 (LNEN…KNSS), 337–359 (NYNN…NNNN), and 536–595 (NNNN…SSSS). Low complexity-rich tracts occupy residues 1185 to 1234 (NNNN…NNNN), 1251 to 1275 (SPST…NNNK), and 1286 to 1305 (SPSS…SSSG).

The protein belongs to the retinoblastoma protein (RB) family.

It localises to the nucleus. Its function is as follows. Key regulator of entry into cell division. Directly involved in heterochromatin formation by maintaining overall chromatin structure and, in particular, that of constitutive heterochromatin by stabilizing histone methylation. Controls histone H4 'Lys-20' trimethylation. Probably acts as a transcription repressor by recruiting chromatin-modifying enzymes to promoters. Plays a dual role, regulating cell-cycle progression and transcriptional events leading to terminal differentiation. In the absence of a G1 phase, functions in late G2 controlling the expression of both S-phase and mitotic genes. Controls stalk/spore preference by suppressing the DIF response in cells destined for the spore pathway. DIF is a chlorinated hydroxyphenone made by cells of spore pathway that promotes stalk differentiation. In Dictyostelium discoideum (Social amoeba), this protein is Retinoblastoma-like protein A.